A 436-amino-acid polypeptide reads, in one-letter code: Methylenetetrahydrofolate--tRNA-(uracil-5-)-methyltransferase TrmFO (436 aa).

10 to 15 is an FAD binding site; sequence GAGLAG.

This sequence belongs to the MnmG family. TrmFO subfamily. Requires FAD as cofactor.

The protein resides in the cytoplasm. The catalysed reaction is uridine(54) in tRNA + (6R)-5,10-methylene-5,6,7,8-tetrahydrofolate + NADH + H(+) = 5-methyluridine(54) in tRNA + (6S)-5,6,7,8-tetrahydrofolate + NAD(+). It carries out the reaction uridine(54) in tRNA + (6R)-5,10-methylene-5,6,7,8-tetrahydrofolate + NADPH + H(+) = 5-methyluridine(54) in tRNA + (6S)-5,6,7,8-tetrahydrofolate + NADP(+). Functionally, catalyzes the folate-dependent formation of 5-methyl-uridine at position 54 (M-5-U54) in all tRNAs. This Staphylococcus carnosus (strain TM300) protein is Methylenetetrahydrofolate--tRNA-(uracil-5-)-methyltransferase TrmFO.